Here is a 378-residue protein sequence, read N- to C-terminus: Chloroplast stem-loop binding protein of 41 kDa b, chloroplastic (378 aa).

The N-terminal 50 residues, 1–50 (MAKMMMLQQHQPSFSLLTSSLSDFNGAKLHLQVQYKRKVHQPKGALYVSA), are a transit peptide targeting the chloroplast. Ser240 bears the Phosphoserine mark.

It belongs to the NAD(P)-dependent epimerase/dehydratase family. In terms of assembly, component of a complex made of CSP41A, CSP41B, ribosomes, and the plastid-encoded RNA polymerase. Interacts with CSP41A. Binds DNA when in complex with PRIN2. In terms of tissue distribution, highly expressed in seedlings, particularly in photosynthetically active organs. Mostly expressed in young and mature leaves, and, to a lower extent, in flowers. Low expression in etiolated seedlings compared to green seedlings.

It is found in the plastid. Its subcellular location is the chloroplast. The protein localises to the plastoglobule. It localises to the cytoplasm. Its function is as follows. Binds and cleaves RNA, particularly in stem-loops. Associates with pre-ribosomal particles in chloroplasts, and participates in chloroplast ribosomal RNA metabolism, probably during the final steps of 23S rRNA maturation. May enhance transcription by the plastid-encoded polymerase and translation in plastid via the stabilization of ribosome assembly intermediates. Required for chloroplast integrity. Involved in the regulation of the circadian system. Involved in the regulation of heteroglycans and monosaccharide mobilization. Required for full expression of genes transcribed by the plastid-encoded RNA polymerase (PEP). Essential for embryo development. The chain is Chloroplast stem-loop binding protein of 41 kDa b, chloroplastic (CSP41B) from Arabidopsis thaliana (Mouse-ear cress).